Consider the following 434-residue polypeptide: Enolase (434 aa).

Gln163 provides a ligand contact to (2R)-2-phosphoglycerate. The active-site Proton donor is Glu205. The Mg(2+) site is built by Asp242, Glu291, and Asp318. The (2R)-2-phosphoglycerate site is built by Lys343, Arg372, Ser373, and Lys394. Catalysis depends on Lys343, which acts as the Proton acceptor.

This sequence belongs to the enolase family. The cofactor is Mg(2+).

It localises to the cytoplasm. Its subcellular location is the secreted. The protein resides in the cell surface. It catalyses the reaction (2R)-2-phosphoglycerate = phosphoenolpyruvate + H2O. The protein operates within carbohydrate degradation; glycolysis; pyruvate from D-glyceraldehyde 3-phosphate: step 4/5. In terms of biological role, catalyzes the reversible conversion of 2-phosphoglycerate (2-PG) into phosphoenolpyruvate (PEP). It is essential for the degradation of carbohydrates via glycolysis. The polypeptide is Enolase (Streptococcus thermophilus (strain ATCC BAA-491 / LMD-9)).